A 489-amino-acid polypeptide reads, in one-letter code: MESYLTKQAVHNRAKEAVGKSVLELNGGESIKQSKSSVGDAFENWFGKKKDSDSKPDMAEAGVELKATPFKKLKNGKYSSKERLVLNIINYEKVANENFETSSFLSKNNTIELAFYEYIKGTPSDNWIIKEAVLYEMHKNPIDYEIIKQDWEIINQYINEGKAHELSEGLTSYLAPCTKGANASSLRNQPYSDIKAKQRAFSLKSGYMTSILRKYVLGDEKIDSIVKDPFEIKEKSIEDIVFEKFQPYINWSIDKLCEHFSINKGEKGLNYRIASAILNLKGKTTKSKPFPEVEEFEKSSIVVKTVHFNKKNVNKESMSFGAFKFEELANEEWEDSEGYPSAQWRNFLLETRFLFFVVKEDEDGVDIFKGIKFFSMPEEDINGPVKRMWDDTVKKLKEGVTLEAVPDKSTKDGWRIKNNFVDKSDDLICHVRPHTNNRDYRGGSNADKLPKKINWINRPDSDDYSDEWMTKQSFWINNDYIKKQVEDLL.

The cofactor is Mg(2+).

The catalysed reaction is Endonucleolytic cleavage of DNA to give specific double-stranded fragments with terminal 5'-phosphates.. An E and P subtype restriction enzyme that recognizes the double-stranded sequence 5'-GATC-3' and cleaves before G-1. In Staphylococcus aureus, this protein is Type II restriction enzyme Sau3AI (sau3AIR).